The sequence spans 483 residues: Spermatogenesis-defective protein 39 homolog (483 aa).

This sequence belongs to the SPE39 family. Interacts with vps33b. In terms of tissue distribution, high levels detected in liver and small intestine of larvae at 5 days post-fertilization.

The protein localises to the cytoplasm. It localises to the cytoplasmic vesicle. Its subcellular location is the early endosome. It is found in the recycling endosome. The protein resides in the late endosome. Proposed to be involved in endosomal maturation implicating in part vps33b. In epithelial cells, the vps33b:vipas39 complex may play a role in the apical rab11a-dependent recycling pathway and in the maintenance of the apical-basolateral polarity. May play a role in lysosomal trafficking, probably via association with the core HOPS complex in a discrete population of endosomes; the functions seems to be independent of vps33b. May play a role in vesicular trafficking during spermatogenesis. May be involved in direct or indirect transcriptional regulation of E-cadherin. The chain is Spermatogenesis-defective protein 39 homolog (vipas39) from Danio rerio (Zebrafish).